Here is a 1537-residue protein sequence, read N- to C-terminus: MPARSAPPPPALPPALRRRLRDLERDEDSLSEKETLQEKLRLTRGFLRAEVQRRLSALDADVRCRELSEERYLAKVKALLRRELAAENGDAAKLFSRASNGCAGNGEEEWERGGRGEDGAMEVEEAAASSSSSSSSSSSSSSSSSSSSSLLPAPRARKARRSRSNGESKKSPASSRVTRSSGRQPTILSVFSKGSTKRKSEEVNGAVKPEVSAEKDEEEEEELEEKEQDEKRIKIETKEGSEIKDEITQVKTSTPAKTTPPKCVDCRQYLDDPDLKFFQGDPDDALEEPEMLTDERLSIFDANEDGFESYEDLPQHKVTSFSVYDKRGHLCPFDTGLIERNIELYFSGAVKPIYDDNPCLDGGVRAKKLGPINAWWITGFDGGEKALIGFTTAFADYILMEPSEEYAPIFALMQEKIYMSKIVVEFLQNNRDVSYEDLLNKIETTVPPVGLNFNRFTEDSLLRHAQFVVEQVESYDEAGDSDEPPVLITPCMRDLIKLAGVTLGKRRAVRRQAIRHPTRIDKDKGPTKATTTKLVYLIFDTFFSEQIEKDEREDDKENAMKRRRCGVCEVCQQPECGKCKACQNMVKFGGSGRSKQACLQRRCPNLAVREADEDEEVDDNIPEMPSPKKMLQGRKKKQNKSRISWVGEPIKSDGKKDFYQRVCIDSETLEVGDCVSVSPDDPTKPLYLARVTAMWEDSSGQMFHAHWFCPGSDTVLGATSDPLELFLVDECEDMQLSYIHGKVNVIYKPPSENWAMEGGLDMEIKMVEDDGRTYFYQMWYDQEYARFETPPRAQPMEDNKYKFCLSCARLDEVRHKEIPKVAEPLDEGDGKMFYAMATKNGVQYRVGDSVYLLPEAFSFSMKPASPAKRPKKEAVDEDLYPEHYRKYSEYIKGSNLDAPDPYRVGRIKEIFCHIRTNGKPNEADIKLRIWKFYRPENTHKSMKATYHADINLLYWSDEETTVDFCAVQGRCTVVYGEDLTESIQDYSAGGLDRFYFLEAYNAKTKSFEDPPNHARSSGNKGKGKGKGKGKGKGKSSTTCEQSEPEPTELKLPKLRTLDVFSGCGGLSEGFHQAGVSETLWAIEMWEPAAQAFRLNNPGTTVFTEDCNVLLKLVMSGEKTNSLGQKLPQKGDVEMLCGGPPCQGFSGMNRFNSRTYSKFKNSLVVSFLSYCDYYRPRFFLLENVRNFVSFKRSMVLKLTLRCLVRMGYQCTFGVLQAGQYGVAQTRRRAIVLAAAPGEKLPMFPEPLHVFAPRACQLSVVVDDKKFVSNITRTYSGPFRTITVRDTMSDLPEIRNGASALEISYNGEPQSWFQRQIRGSQYQPILRDHICKDMSALVAARMRHIPLAPGSDWRDLPNIEVRLSDGTSTRKLRYTHHEKKNGRSSSGALRGVCSCAEGKPCDPADRQFNTLIPWCLPHTGNRHNHWAGLYGRLEWDGFFSTTVTNPEPMGKQGRVLHPEQHRVVSVRECARSQGFPDTYRLFGNILDKHRQVGNAVPPPLAKAIGLEIRACVGARMREESGAAVAPPAPEKMEMTAAAD.

Pro residues predominate over residues 1 to 13 (MPARSAPPPPALP). 2 disordered regions span residues 1–34 (MPAR…SEKE) and 97–232 (RASN…DEKR). The region spanning 8–105 (PPPALPPALR…SRASNGCAGN (98 aa)) is the DMAP1-binding domain. Positions 21–34 (RDLERDEDSLSEKE) are enriched in basic and acidic residues. The segment covering 129 to 154 (SSSSSSSSSSSSSSSSSSSSSLLPAP) has biased composition (low complexity). The span at 171-194 (SPASSRVTRSSGRQPTILSVFSKG) shows a compositional bias: polar residues. The interaction with PCNA stretch occupies residues 182–194 (GRQPTILSVFSKG). The span at 215 to 227 (KDEEEEEELEEKE) shows a compositional bias: acidic residues. Zn(2+) contacts are provided by C263, C266, and H329. Position 420 is a phosphoserine (S420). Residues 558-604 (NAMKRRRCGVCEVCQQPECGKCKACQNMVKFGGSGRSKQACLQRRCP) form a CXXC-type zinc finger. Residues C565, C568, C571, C576, C579, C582, C598, and C603 each contribute to the Zn(2+) site. Residues 614 to 638 (DEEVDDNIPEMPSPKKMLQGRKKKQ) form a disordered region. 2 consecutive BAH domains span residues 667–791 (ETLE…ETPP) and 883–1011 (HYRK…EDPP). The tract at residues 1006 to 1050 (SFEDPPNHARSSGNKGKGKGKGKGKGKGKSSTTCEQSEPEPTELK) is disordered. Tandem repeats lie at residues 1020–1021 (KG), 1022–1023 (KG), 1024–1025 (KG), 1026–1027 (KG), 1028–1029 (KG), 1030–1031 (KG), and 1032–1033 (KG). The segment at 1020–1035 (KGKGKGKGKGKGKGKS) is 8 X 2 AA tandem repeats of K-G. Residues 1021–1033 (GKGKGKGKGKGKG) show a composition bias toward basic residues. The stretch at 1034 to 1035 (KS) is one 8; approximate repeat. One can recognise an SAM-dependent MTase C5-type domain in the interval 1054-1513 (LRTLDVFSGC…LEIRACVGAR (460 aa)). S-adenosyl-L-methionine-binding positions include S1061, 1065 to 1066 (GL), 1083 to 1084 (EM), 1105 to 1106 (DC), and C1106. The active site involves C1141. The S-adenosyl-L-methionine site is built by N1492 and V1494. The tract at residues 1518–1537 (SGAAVAPPAPEKMEMTAAAD) is disordered.

It belongs to the class I-like SAM-binding methyltransferase superfamily. C5-methyltransferase family. Homodimer. Interacts with PCNA. As to expression, testis and lung.

It is found in the nucleus. It carries out the reaction a 2'-deoxycytidine in DNA + S-adenosyl-L-methionine = a 5-methyl-2'-deoxycytidine in DNA + S-adenosyl-L-homocysteine + H(+). In terms of biological role, methylates CpG residues. Preferentially methylates hemimethylated DNA. It is responsible for maintaining methylation patterns established in development. Mediates transcriptional repression by direct binding to HDAC2. Plays a role in promoter hypermethylation and transcriptional silencing of tumor suppressor genes (TSGs) or other tumor-related genes. Also required to maintain a transcriptionally repressive state of genes in undifferentiated embryonic stem cells (ESCs). Associates at promoter regions of tumor suppressor genes (TSGs) leading to their gene silencing. This is DNA (cytosine-5)-methyltransferase 1 (DNMT1) from Gallus gallus (Chicken).